The primary structure comprises 264 residues: Acyl-[acyl-carrier-protein]--UDP-N-acetylglucosamine O-acyltransferase (264 aa).

This sequence belongs to the transferase hexapeptide repeat family. LpxA subfamily. As to quaternary structure, homotrimer.

The protein localises to the cytoplasm. It carries out the reaction a (3R)-hydroxyacyl-[ACP] + UDP-N-acetyl-alpha-D-glucosamine = a UDP-3-O-[(3R)-3-hydroxyacyl]-N-acetyl-alpha-D-glucosamine + holo-[ACP]. It functions in the pathway glycolipid biosynthesis; lipid IV(A) biosynthesis; lipid IV(A) from (3R)-3-hydroxytetradecanoyl-[acyl-carrier-protein] and UDP-N-acetyl-alpha-D-glucosamine: step 1/6. Its function is as follows. Involved in the biosynthesis of lipid A, a phosphorylated glycolipid that anchors the lipopolysaccharide to the outer membrane of the cell. This is Acyl-[acyl-carrier-protein]--UDP-N-acetylglucosamine O-acyltransferase from Rickettsia africae (strain ESF-5).